Consider the following 748-residue polypeptide: Basic juvenile hormone-suppressible protein 1 (748 aa).

The N-terminal stretch at 1-17 (MRVLVLVASLGLRGSVV) is a signal peptide.

The protein belongs to the hemocyanin family. As to expression, fat body, and hemolymph of larvae.

In Trichoplusia ni (Cabbage looper), this protein is Basic juvenile hormone-suppressible protein 1 (BJSP-1).